Here is a 93-residue protein sequence, read N- to C-terminus: Defensin 5 (93 aa).

A signal peptide spans 1-19 (MKKLVLLSALVLLALQVEA). A propeptide spanning residues 20–58 (EPTPKTDEGTKTDEQPGKEDQVVSVSIEGQGDPAFQDAV) is cleaved from the precursor. Intrachain disulfides connect C64-C92, C66-C81, and C71-C91.

Belongs to the alpha-defensin family. As to expression, small intestine. Not present in heart, liver, spleen, kidney, large intestine and colon.

The protein resides in the secreted. Functionally, probably contributes to the antimicrobial barrier function of the small intestine. The chain is Defensin 5 from Rattus norvegicus (Rat).